Consider the following 328-residue polypeptide: HTH-type transcriptional regulator MalR (328 aa).

An HTH lacI-type domain is found at 2–57; sequence PVTIKDVAKAAGVSPSTVTRVIQNKSTISDETKKRVRKAMKELNYHPNLNARSLVS. The H-T-H motif DNA-binding region spans 5-24; sequence IKDVAKAAGVSPSTVTRVIQ. The interval 173–218 is inducer binding; the sequence is TEYFIKKGCKRIAFIGGSKKLFVTKDRLTGYEQALKHYKLTTDNNR. Residues 282 to 291 are dimerization; that stretch reads NLAAYVDINS.

Its function is as follows. Transcriptional repressor of the maltosaccharide utilization operons malxCD and malMP. The polypeptide is HTH-type transcriptional regulator MalR (malR) (Streptococcus pneumoniae serotype 4 (strain ATCC BAA-334 / TIGR4)).